The primary structure comprises 479 residues: NADH dehydrogenase [ubiquinone] flavoprotein 1, mitochondrial (479 aa).

103–112 (GRGGAGFPSG) serves as a coordination point for NADH. FMN is bound at residue 216-264 (RGAGAYICGEETALIESIEGKQGKPRLKPPFPAMAGLYGCPTTVTNVET). [4Fe-4S] cluster is bound by residues Cys-396, Cys-399, Cys-402, and Cys-442.

Belongs to the complex I 51 kDa subunit family. Complex I is composed of about 45 different subunits. This is a component of the flavoprotein-sulfur (FP) fragment of the enzyme. FMN serves as cofactor. [4Fe-4S] cluster is required as a cofactor.

It localises to the mitochondrion inner membrane. The catalysed reaction is a ubiquinone + NADH + 5 H(+)(in) = a ubiquinol + NAD(+) + 4 H(+)(out). In terms of biological role, core subunit of the mitochondrial membrane respiratory chain NADH dehydrogenase (Complex I) that is believed to belong to the minimal assembly required for catalysis. Complex I functions in the transfer of electrons from NADH to the respiratory chain. The immediate electron acceptor for the enzyme is believed to be ubiquinone. The protein is NADH dehydrogenase [ubiquinone] flavoprotein 1, mitochondrial (ndufv1) of Dictyostelium discoideum (Social amoeba).